A 266-amino-acid polypeptide reads, in one-letter code: MADKDEAATRGNDWEVVSLTASAYAAAPGPKPVVDSKDDDHKEVTPCYEAETSHPLYMSRHFVFPPTGQLENTSDLTEASLTGSHCKEGSDLSLKGLDLSDDFGGLEFSEDKGKKEENIYTTAMSSLDDERAIGGSHVYEPVEEPTEPVSPSDVTLDLNPIKDDEVANSPPSEEAWWKRSVASLIAQAKETNTVWSICIAAAVMGIVILGQHWQQERWQILQQKWESSIGNEKAGRLMGPISRLKQAFVGGQRRDSFIRASAQNDR.

Positions 14–17 match the AIM (Atg8-family-interacting motif) motif; it reads WEVV. A helical transmembrane segment spans residues 191-210; sequence TNTVWSICIAAAVMGIVILG. An AIM (Atg8-family-interacting motif) motif is present at residues 218-221; sequence WQIL.

Interacts with ATG8F.

The protein resides in the endoplasmic reticulum membrane. The protein localises to the membrane. May be involved in salt stress-induced vesicle-to-vacuole trafficking pathway. Through its interaction with ATG8F, may enable delivery of the vesicle bodies to the vacuole by an autophagic pathway. Plays a role in seed germination in response to exogenous abscisic acid (ABA) treatment. The polypeptide is ATG8-interacting protein 2 (Arabidopsis thaliana (Mouse-ear cress)).